A 340-amino-acid polypeptide reads, in one-letter code: Phosphoribosylformylglycinamidine cyclo-ligase (340 aa).

It belongs to the AIR synthase family.

The protein resides in the cytoplasm. The enzyme catalyses 2-formamido-N(1)-(5-O-phospho-beta-D-ribosyl)acetamidine + ATP = 5-amino-1-(5-phospho-beta-D-ribosyl)imidazole + ADP + phosphate + H(+). It participates in purine metabolism; IMP biosynthesis via de novo pathway; 5-amino-1-(5-phospho-D-ribosyl)imidazole from N(2)-formyl-N(1)-(5-phospho-D-ribosyl)glycinamide: step 2/2. The polypeptide is Phosphoribosylformylglycinamidine cyclo-ligase (Streptococcus agalactiae serotype Ia (strain ATCC 27591 / A909 / CDC SS700)).